Consider the following 678-residue polypeptide: Methionine--tRNA ligase (678 aa).

The 'HIGH' region motif lies at 12 to 22; it reads PYANGPIHLGH. Zn(2+)-binding residues include Cys-143, Cys-146, Cys-156, and Cys-159. The 'KMSKS' region motif lies at 328-332; the sequence is KMSKS. Lys-331 contacts ATP. Positions 577–678 constitute a tRNA-binding domain; the sequence is DFSKVDLRIA…SGAQPGMRVK (102 aa).

The protein belongs to the class-I aminoacyl-tRNA synthetase family. MetG type 1 subfamily. In terms of assembly, homodimer. The cofactor is Zn(2+).

It localises to the cytoplasm. It carries out the reaction tRNA(Met) + L-methionine + ATP = L-methionyl-tRNA(Met) + AMP + diphosphate. Its function is as follows. Is required not only for elongation of protein synthesis but also for the initiation of all mRNA translation through initiator tRNA(fMet) aminoacylation. This is Methionine--tRNA ligase from Acidithiobacillus ferrooxidans (strain ATCC 23270 / DSM 14882 / CIP 104768 / NCIMB 8455) (Ferrobacillus ferrooxidans (strain ATCC 23270)).